The primary structure comprises 599 residues: MPHGHPGSQPDEGGELSNGSSSGELTAQIRFLEDEIALLRRKLTESPRHARLLEQRLAEATERVNQLTERNTKLIDTLREARGQLLALREEVDRLAQPPSGYGVFLARFEDGTVDVFTSGRRMRVSVSPSVETSSLVMGQSVRLNEALTVVEGGDFERTGEVCALREVLDDGGPEGSVARALVVGHADEERVVWLAQPLLDSPLKAGDSLLVDSKAGFAYERVPKAEVEDLVLEEVPDVRYEDIGGLSRQIEQIRDAVELPFLHADLFREYKLRPPKGVLLYGPPGCGKTLIAKAVANSLAKQVSKARGEDHKDAKSFFLNIKGPELLNKFVGETERHIRLIFQRAREKASEGTPVIVFFDEMDSIFRTRGSGVSSDVETTIVPQLLSEIDGVEGLENVIVIGASNREDMIDPAILRPGRLDVKIKIERPDAEGAKDIFAKYLTDDLPLHADDLTEFGGDPAACIQGMVQHTVERMYEETDENRFLEVTYANGDKEVLYFRDFNSGAMIQNIVDRAKKSAIKSLLDTKQPGLSVRHLMDAIVDEFAENEDLPNTTNPDDWARISGKKGERIVYIRTLVTGKNQETGRAIDTATNTGQYL.

Residues 1 to 22 (MPHGHPGSQPDEGGELSNGSSS) form a disordered region. Positions 21-97 (SSGELTAQIR…LREEVDRLAQ (77 aa)) form a coiled coil. 286–291 (GCGKTL) contributes to the ATP binding site. The segment at 598–599 (YL) is docks into pockets in the proteasome alpha-ring.

The protein belongs to the AAA ATPase family. As to quaternary structure, homohexamer. Assembles into a hexameric ring structure that caps the 20S proteasome core. Strongly interacts with the prokaryotic ubiquitin-like protein Pup through a hydrophobic interface; the interacting region of ARC lies in its N-terminal coiled-coil domain. There is one Pup binding site per ARC hexamer ring. Upon ATP-binding, the C-terminus of ARC interacts with the alpha-rings of the proteasome core, possibly by binding to the intersubunit pockets.

It participates in protein degradation; proteasomal Pup-dependent pathway. Functionally, ATPase which is responsible for recognizing, binding, unfolding and translocation of pupylated proteins into the bacterial 20S proteasome core particle. May be essential for opening the gate of the 20S proteasome via an interaction with its C-terminus, thereby allowing substrate entry and access to the site of proteolysis. Thus, the C-termini of the proteasomal ATPase may function like a 'key in a lock' to induce gate opening and therefore regulate proteolysis. The sequence is that of Proteasome-associated ATPase from Actinosynnema mirum (strain ATCC 29888 / DSM 43827 / JCM 3225 / NBRC 14064 / NCIMB 13271 / NRRL B-12336 / IMRU 3971 / 101).